We begin with the raw amino-acid sequence, 926 residues long: Vacuolar protein sorting-associated protein 39 homolog (926 aa).

A CNH domain is found at 15 to 306; it reads PVEVTCLAFQ…MTLCSGARGQ (292 aa). The CHCR repeat unit spans residues 590 to 768; the sequence is DETEMARNLN…LFRTLVHPNQ (179 aa).

Belongs to the VAM6/VPS39 family. In terms of assembly, probable core component of the homotypic fusion and vacuole protein sorting (HOPS) complex consisting of the core class C Vps proteins vps-11, vps-16, vps-18, and which further associates with vps-33.1, vps-39 and vps-41. May interact with lgg-2. Interacts with cuti-1.

The protein localises to the cytoplasm. The protein resides in the lysosome membrane. It is found in the late endosome membrane. Its subcellular location is the late endosome. It localises to the lysosome. Plays a role in vesicle-mediated protein trafficking to lysosomal compartments including the endocytic membrane transport and autophagic pathways. Believed to act in part as a component of the putative HOPS endosomal tethering complex which is proposed to be involved in the rab-5-to-rab-7 endosome conversion probably implicating sand-1, and via binding SNAREs and SNARE complexes to mediate tethering and docking events during SNARE-mediated membrane fusion. The HOPS complex is proposed to be recruited to rab-7 on the late endosomal membrane and to regulate late endocytic, phagocytic and autophagic traffic towards lysosomes. Involved in homotypic vesicle fusions between late endosomes and in heterotypic fusions between late endosomes and lysosomes. Required for fusion of endosomes. In association with lgg-2 mediates the tethering of autophagosomes with lysosomes to form autolysosomes. Within the HOPS complex, contributes to the normal development of gut granules in embryonic and adult intestinal cells. The sequence is that of Vacuolar protein sorting-associated protein 39 homolog from Caenorhabditis elegans.